The sequence spans 36 residues: Photosystem I reaction center subunit VIII (36 aa).

A helical transmembrane segment spans residues 6–28 (LPSIFVPLVGLMFPAIAMASLSL).

This sequence belongs to the PsaI family.

It localises to the plastid. The protein resides in the chloroplast thylakoid membrane. Its function is as follows. May help in the organization of the PsaL subunit. This chain is Photosystem I reaction center subunit VIII, found in Calycanthus floridus var. glaucus (Eastern sweetshrub).